Consider the following 378-residue polypeptide: Carbamoyl phosphate synthase small chain (378 aa).

Positions Met1–Asn188 are CPSase. Residues Ser49, Gly244, and Gly246 each coordinate L-glutamine. The region spanning Lys192 to Lys378 is the Glutamine amidotransferase type-1 domain. The active-site Nucleophile is the Cys272. Leu273, Gln276, Asn314, and Tyr317 together coordinate L-glutamine. Residues His355 and Glu357 contribute to the active site.

Belongs to the CarA family. Composed of two chains; the small (or glutamine) chain promotes the hydrolysis of glutamine to ammonia, which is used by the large (or ammonia) chain to synthesize carbamoyl phosphate. Tetramer of heterodimers (alpha,beta)4.

It carries out the reaction hydrogencarbonate + L-glutamine + 2 ATP + H2O = carbamoyl phosphate + L-glutamate + 2 ADP + phosphate + 2 H(+). The enzyme catalyses L-glutamine + H2O = L-glutamate + NH4(+). Its pathway is amino-acid biosynthesis; L-arginine biosynthesis; carbamoyl phosphate from bicarbonate: step 1/1. The protein operates within pyrimidine metabolism; UMP biosynthesis via de novo pathway; (S)-dihydroorotate from bicarbonate: step 1/3. In terms of biological role, small subunit of the glutamine-dependent carbamoyl phosphate synthetase (CPSase). CPSase catalyzes the formation of carbamoyl phosphate from the ammonia moiety of glutamine, carbonate, and phosphate donated by ATP, constituting the first step of 2 biosynthetic pathways, one leading to arginine and/or urea and the other to pyrimidine nucleotides. The small subunit (glutamine amidotransferase) binds and cleaves glutamine to supply the large subunit with the substrate ammonia. This chain is Carbamoyl phosphate synthase small chain, found in Helicobacter hepaticus (strain ATCC 51449 / 3B1).